We begin with the raw amino-acid sequence, 173 residues long: Shikimate kinase (173 aa).

Position 14 to 19 (14 to 19 (GAGKST)) interacts with ATP. Ser-18 contacts Mg(2+). Substrate is bound by residues Asp-36, Arg-60, and Gly-82. Arg-120 is an ATP binding site. Arg-140 lines the substrate pocket. Residue Gln-157 coordinates ATP.

It belongs to the shikimate kinase family. Monomer. It depends on Mg(2+) as a cofactor.

It is found in the cytoplasm. The enzyme catalyses shikimate + ATP = 3-phosphoshikimate + ADP + H(+). Its pathway is metabolic intermediate biosynthesis; chorismate biosynthesis; chorismate from D-erythrose 4-phosphate and phosphoenolpyruvate: step 5/7. Catalyzes the specific phosphorylation of the 3-hydroxyl group of shikimic acid using ATP as a cosubstrate. The chain is Shikimate kinase from Buchnera aphidicola subsp. Acyrthosiphon pisum (strain APS) (Acyrthosiphon pisum symbiotic bacterium).